Consider the following 516-residue polypeptide: Acetylcholine receptor subunit alpha-like (516 aa).

The signal sequence occupies residues 1–21; that stretch reads MRSVTKYYLHGVVLFATGCAG. The Extracellular segment spans residues 22–243; the sequence is NPDAKRLYDD…ITMRRKTLFY (222 aa). 2 N-linked (GlcNAc...) asparagine glycosylation sites follow: Asn-45 and Asn-132. Intrachain disulfides connect Cys-149–Cys-163 and Cys-222–Cys-223. An N-linked (GlcNAc...) asparagine glycan is attached at Asn-233. The next 3 membrane-spanning stretches (helical) occupy residues 244–264, 274–294, and 306–326; these read TVNL…VFYL, LSIS…EIIP, and FVLF…VVLN. Topologically, residues 327–465 are cytoplasmic; that stretch reads VHFRSPQTHT…WKYVAMVLDR (139 aa). The chain crosses the membrane as a helical span at residues 466–486; that stretch reads PFLWIFTLAVVVGSAGIILQA.

It belongs to the ligand-gated ion channel (TC 1.A.9) family. Acetylcholine receptor (TC 1.A.9.1) subfamily.

The protein localises to the postsynaptic cell membrane. It is found in the cell membrane. After binding acetylcholine, the AChR responds by an extensive change in conformation that affects all subunits and leads to opening of an ion-conducting channel across the plasma membrane. In Manduca sexta (Tobacco hawkmoth), this protein is Acetylcholine receptor subunit alpha-like (ARA1).